Here is a 208-residue protein sequence, read N- to C-terminus: Small ribosomal subunit protein eS8 (208 aa).

Residues 1 to 27 (MGISRDNWHKRRKTGGKRKPYHKKRKY) form a disordered region. Gly2 carries N-myristoyl glycine lipidation. Over residues 8-26 (WHKRRKTGGKRKPYHKKRK) the composition is skewed to basic residues. N6-acetyllysine occurs at positions 37 and 128. A Phosphothreonine modification is found at Thr130. Ser160 carries the post-translational modification Phosphoserine. Glycyl lysine isopeptide (Lys-Gly) (interchain with G-Cter in SUMO2) cross-links involve residues Lys170 and Lys193.

It belongs to the eukaryotic ribosomal protein eS8 family. Component of the small ribosomal subunit. Identified in a IGF2BP1-dependent mRNP granule complex containing untranslated mRNAs. Part of the small subunit (SSU) processome, composed of more than 70 proteins and the RNA chaperone small nucleolar RNA (snoRNA) U3.

The protein resides in the cytoplasm. The protein localises to the membrane. Its subcellular location is the nucleus. It localises to the nucleolus. Functionally, component of the small ribosomal subunit. The ribosome is a large ribonucleoprotein complex responsible for the synthesis of proteins in the cell. Part of the small subunit (SSU) processome, first precursor of the small eukaryotic ribosomal subunit. During the assembly of the SSU processome in the nucleolus, many ribosome biogenesis factors, an RNA chaperone and ribosomal proteins associate with the nascent pre-rRNA and work in concert to generate RNA folding, modifications, rearrangements and cleavage as well as targeted degradation of pre-ribosomal RNA by the RNA exosome. This Mus musculus (Mouse) protein is Small ribosomal subunit protein eS8 (Rps8).